Consider the following 336-residue polypeptide: MSPAIDIAIVGATGTVGAAIVEILEERDFPVGQLHLLASPASAGKSVSFKGRNLRVKSIEAFDFAQVRLVFFAAGQAVTRQYASQARAAGCMLVDLSGALPLQQAPRVVAEVNPQVLEKLEAPCQVTSPASQVVALALALAPLRPLVRWRHLGVTACLPVSSLGREGVAELARQTTELLNGRPPKPRFFDRQIAFNLLGRVGDSDTAGHTGLERRLVEESRQVLDAPELKISVTCLMAPVFFGDSLSLAVQASQAIDPSAVRAALERAPGLELIEPDDCPTVIGDAVGQDVAYVGRVRTGVDDACELDLWIASDNVRKGSALNAVQLAELLIKQGR.

This sequence belongs to the aspartate-semialdehyde dehydrogenase family.

The chain is USG-1 protein homolog (usg) from Azotobacter vinelandii.